The chain runs to 853 residues: Envelope glycoprotein gp160 (853 aa).

The N-terminal stretch at 1–31 is a signal peptide; that stretch reads MRARGIERNCQNWWKWGIMLLGILMTCSAAD. Topologically, residues 32–681 are extracellular; that stretch reads NLWVTVYYGV…ITQWLWYIKI (650 aa). Cysteines 53 and 73 form a disulfide. N87, N129, N137, N143, N153, N157, N183, N188, N198, N235, N242, N263, N277, and N290 each carry an N-linked (GlcNAc...) asparagine; by host glycan. 5 cysteine pairs are disulfide-bonded: C118/C206, C125/C197, C130/C154, C219/C248, and C229/C240. The V1 stretch occupies residues 130 to 153; the sequence is CSDELRNNGTMGNNVTTEEKGMKN. The interval 154–197 is V2; that stretch reads CSFNVTTVLKDKKQQVYALFYRLDIVPIDNDSSTNSTNYRLINC. The tract at residues 297 to 329 is V3; that stretch reads CARPYQNTRQRTPIGLGQSLYTTRSRSIIGQAH. C297 and C330 form a disulfide bridge. N-linked (GlcNAc...) asparagine; by host glycans are attached at residues N331 and N353. The interval 362-372 is CD4-binding loop; the sequence is SSGGDPEITTH. Intrachain disulfides connect C376-C442 and C383-C416. Positions 383–416 are V4; the sequence is CNTSGLFNSTWNISAWNNITESNNSTNTNITLQC. N-linked (GlcNAc...) asparagine; by host glycosylation is found at N384, N390, N394, N400, N405, N406, N411, N445, N458, N459, and N462. V5 regions lie at residues 457–468 and 460–468; these read INNSTNETFRPG and STNETFRPG. The tract at residues 509 to 529 is fusion peptide; the sequence is AIGLGAMFLGFLGAAGSTMGA. Residues 571–589 are immunosuppression; sequence KQLQARILAVERYLKDQQL. A disulfide bond links C595 and C601. N-linked (GlcNAc...) asparagine; by host glycans are attached at residues N608, N613, N622, and N634. A coiled-coil region spans residues 630–664; the sequence is REIDNYTGLIYSLIEESQTQQEKNEKELLELDKWA. The MPER; binding to GalCer stretch occupies residues 659 to 680; it reads ELDKWASLWNWFSITQWLWYIK. Residues 682 to 702 traverse the membrane as a helical segment; that stretch reads FIMIIGGLIGLRIVFAVLSLV. At 703-853 the chain is on the cytoplasmic side; it reads NRVRQGYSPL…IRQGLERSLL (151 aa). The YXXL motif; contains endocytosis signal signature appears at 709 to 712; it reads YSPL. Residues 716 to 738 form a disordered region; that stretch reads TLLPAPRGPDRPEGTEEEGGERG. Residues 723 to 738 show a composition bias toward basic and acidic residues; that stretch reads GPDRPEGTEEEGGERG. S-palmitoyl cysteine; by host attachment occurs at residues C761 and C834. The Di-leucine internalization motif motif lies at 852–853; it reads LL.

This sequence belongs to the HIV-1 env protein family. The mature envelope protein (Env) consists of a homotrimer of non-covalently associated gp120-gp41 heterodimers. The resulting complex protrudes from the virus surface as a spike. There seems to be as few as 10 spikes on the average virion. Interacts with host CD4, CCR5 and CXCR4. Gp120 also interacts with the C-type lectins CD209/DC-SIGN and CLEC4M/DC-SIGNR (collectively referred to as DC-SIGN(R)). Gp120 and gp41 interact with GalCer. Gp120 interacts with host ITGA4/ITGB7 complex; on CD4+ T-cells, this interaction results in rapid activation of integrin ITGAL/LFA-1, which facilitates efficient cell-to-cell spreading of HIV-1. Gp120 interacts with cell-associated heparan sulfate; this interaction increases virus infectivity on permissive cells and may be involved in infection of CD4- cells. As to quaternary structure, the mature envelope protein (Env) consists of a homotrimer of non-covalently associated gp120-gp41 heterodimers. The resulting complex protrudes from the virus surface as a spike. There seems to be as few as 10 spikes on the average virion. Post-translationally, highly glycosylated by host. The high number of glycan on the protein is reffered to as 'glycan shield' because it contributes to hide protein sequence from adaptive immune system. In terms of processing, palmitoylation of the transmembrane protein and of Env polyprotein (prior to its proteolytic cleavage) is essential for their association with host cell membrane lipid rafts. Palmitoylation is therefore required for envelope trafficking to classical lipid rafts, but not for viral replication. Specific enzymatic cleavages in vivo yield mature proteins. Envelope glycoproteins are synthesized as an inactive precursor that is heavily N-glycosylated and processed likely by host cell furin in the Golgi to yield the mature SU and TM proteins. The cleavage site between SU and TM requires the minimal sequence [KR]-X-[KR]-R. About 2 of the 9 disulfide bonds of gp41 are reduced by P4HB/PDI, following binding to CD4 receptor.

Its subcellular location is the virion membrane. It localises to the host cell membrane. The protein resides in the host endosome membrane. Its function is as follows. Oligomerizes in the host endoplasmic reticulum into predominantly trimers. In a second time, gp160 transits in the host Golgi, where glycosylation is completed. The precursor is then proteolytically cleaved in the trans-Golgi and thereby activated by cellular furin or furin-like proteases to produce gp120 and gp41. In terms of biological role, attaches the virus to the host lymphoid cell by binding to the primary receptor CD4. This interaction induces a structural rearrangement creating a high affinity binding site for a chemokine coreceptor like CXCR4 and/or CCR5. Acts as a ligand for CD209/DC-SIGN and CLEC4M/DC-SIGNR, which are respectively found on dendritic cells (DCs), and on endothelial cells of liver sinusoids and lymph node sinuses. These interactions allow capture of viral particles at mucosal surfaces by these cells and subsequent transmission to permissive cells. HIV subverts the migration properties of dendritic cells to gain access to CD4+ T-cells in lymph nodes. Virus transmission to permissive T-cells occurs either in trans (without DCs infection, through viral capture and transmission), or in cis (following DCs productive infection, through the usual CD4-gp120 interaction), thereby inducing a robust infection. In trans infection, bound virions remain infectious over days and it is proposed that they are not degraded, but protected in non-lysosomal acidic organelles within the DCs close to the cell membrane thus contributing to the viral infectious potential during DCs' migration from the periphery to the lymphoid tissues. On arrival at lymphoid tissues, intact virions recycle back to DCs' cell surface allowing virus transmission to CD4+ T-cells. Functionally, acts as a class I viral fusion protein. Under the current model, the protein has at least 3 conformational states: pre-fusion native state, pre-hairpin intermediate state, and post-fusion hairpin state. During fusion of viral and target intracellular membranes, the coiled coil regions (heptad repeats) assume a trimer-of-hairpins structure, positioning the fusion peptide in close proximity to the C-terminal region of the ectodomain. The formation of this structure appears to drive apposition and subsequent fusion of viral and target cell membranes. Complete fusion occurs in host cell endosomes and is dynamin-dependent, however some lipid transfer might occur at the plasma membrane. The virus undergoes clathrin-dependent internalization long before endosomal fusion, thus minimizing the surface exposure of conserved viral epitopes during fusion and reducing the efficacy of inhibitors targeting these epitopes. Membranes fusion leads to delivery of the nucleocapsid into the cytoplasm. The polypeptide is Envelope glycoprotein gp160 (Human immunodeficiency virus type 1 group M subtype D (isolate ELI) (HIV-1)).